Here is a 181-residue protein sequence, read N- to C-terminus: Inner membrane-spanning protein YciB (181 aa).

5 helical membrane passes run 3–23 (LLFD…FGIY), 54–74 (SLAI…PWFI), 81–101 (IYWL…KPLI), 119–139 (LNLA…YVAY), and 149–169 (FKLF…AFYL).

It belongs to the YciB family.

It is found in the cell inner membrane. In terms of biological role, plays a role in cell envelope biogenesis, maintenance of cell envelope integrity and membrane homeostasis. The sequence is that of Inner membrane-spanning protein YciB from Legionella pneumophila subsp. pneumophila (strain Philadelphia 1 / ATCC 33152 / DSM 7513).